The primary structure comprises 718 residues: Phenylalanine--tRNA ligase beta subunit (718 aa).

The tRNA-binding domain occupies 39-153; it reads LNEISGIKFG…IFDLESNPLK (115 aa). The B5 domain maps to 386–460; the sequence is SKKTFLDLNY…RFYGLEKLKD (75 aa). Residues aspartate 438, aspartate 444, and aspartate 448 each contribute to the Mg(2+) site.

The protein belongs to the phenylalanyl-tRNA synthetase beta subunit family. Type 1 subfamily. In terms of assembly, tetramer of two alpha and two beta subunits. Mg(2+) serves as cofactor.

It localises to the cytoplasm. It catalyses the reaction tRNA(Phe) + L-phenylalanine + ATP = L-phenylalanyl-tRNA(Phe) + AMP + diphosphate + H(+). The polypeptide is Phenylalanine--tRNA ligase beta subunit (Mesomycoplasma hyopneumoniae (strain J / ATCC 25934 / NCTC 10110) (Mycoplasma hyopneumoniae)).